The sequence spans 393 residues: Succinate--CoA ligase [ADP-forming] subunit beta (393 aa).

Positions 9 to 237 (RDLFAKHGVP…KDAANPLEAA (229 aa)) constitute an ATP-grasp domain. Residues Lys-45, 52 to 54 (GRG), Glu-92, Pro-95, and Glu-100 each bind ATP. 2 residues coordinate Mg(2+): Asn-192 and Asp-206. Substrate contacts are provided by residues Asn-257 and 319-321 (GIT).

This sequence belongs to the succinate/malate CoA ligase beta subunit family. As to quaternary structure, heterotetramer of two alpha and two beta subunits. Mg(2+) is required as a cofactor.

The catalysed reaction is succinate + ATP + CoA = succinyl-CoA + ADP + phosphate. It catalyses the reaction GTP + succinate + CoA = succinyl-CoA + GDP + phosphate. Its pathway is carbohydrate metabolism; tricarboxylic acid cycle; succinate from succinyl-CoA (ligase route): step 1/1. Succinyl-CoA synthetase functions in the citric acid cycle (TCA), coupling the hydrolysis of succinyl-CoA to the synthesis of either ATP or GTP and thus represents the only step of substrate-level phosphorylation in the TCA. The beta subunit provides nucleotide specificity of the enzyme and binds the substrate succinate, while the binding sites for coenzyme A and phosphate are found in the alpha subunit. The polypeptide is Succinate--CoA ligase [ADP-forming] subunit beta (Streptomyces griseus subsp. griseus (strain JCM 4626 / CBS 651.72 / NBRC 13350 / KCC S-0626 / ISP 5235)).